A 509-amino-acid polypeptide reads, in one-letter code: 2-isopropylmalate synthase (509 aa).

Residues 5 to 267 (IQIFDTTLRD…QTALNLEETK (263 aa)) enclose the Pyruvate carboxyltransferase domain. Mn(2+) contacts are provided by Asp-14, His-202, His-204, and Asn-238. The regulatory domain stretch occupies residues 391 to 509 (KLETLQLQYV…AAENVEKVGN (119 aa)).

It belongs to the alpha-IPM synthase/homocitrate synthase family. LeuA type 1 subfamily. As to quaternary structure, homodimer. The cofactor is Mn(2+).

It is found in the cytoplasm. The enzyme catalyses 3-methyl-2-oxobutanoate + acetyl-CoA + H2O = (2S)-2-isopropylmalate + CoA + H(+). It participates in amino-acid biosynthesis; L-leucine biosynthesis; L-leucine from 3-methyl-2-oxobutanoate: step 1/4. In terms of biological role, catalyzes the condensation of the acetyl group of acetyl-CoA with 3-methyl-2-oxobutanoate (2-ketoisovalerate) to form 3-carboxy-3-hydroxy-4-methylpentanoate (2-isopropylmalate). The polypeptide is 2-isopropylmalate synthase (Staphylococcus aureus (strain USA300)).